Reading from the N-terminus, the 258-residue chain is D-aminoacyl-tRNA deacylase (258 aa).

It belongs to the DtdA deacylase family. Monomer. Zn(2+) serves as cofactor.

It catalyses the reaction a D-aminoacyl-tRNA + H2O = a tRNA + a D-alpha-amino acid + H(+). It carries out the reaction glycyl-tRNA(Ala) + H2O = tRNA(Ala) + glycine + H(+). In terms of biological role, D-aminoacyl-tRNA deacylase with broad substrate specificity. By recycling D-aminoacyl-tRNA to D-amino acids and free tRNA molecules, this enzyme counteracts the toxicity associated with the formation of D-aminoacyl-tRNA entities in vivo. The protein is D-aminoacyl-tRNA deacylase of Cenarchaeum symbiosum (strain A).